The sequence spans 131 residues: Glycine cleavage system H protein (131 aa).

Positions 24–106 (RVTVGISDHA…YGEGWIFVVE (83 aa)) constitute a Lipoyl-binding domain. Residue K65 is modified to N6-lipoyllysine.

Belongs to the GcvH family. As to quaternary structure, the glycine cleavage system is composed of four proteins: P, T, L and H. Requires (R)-lipoate as cofactor.

Its function is as follows. The glycine cleavage system catalyzes the degradation of glycine. The H protein shuttles the methylamine group of glycine from the P protein to the T protein. The chain is Glycine cleavage system H protein from Xanthomonas axonopodis pv. citri (strain 306).